Reading from the N-terminus, the 33-residue chain is Fatty acid-binding protein, intestinal (33 aa).

This sequence belongs to the calycin superfamily. Fatty-acid binding protein (FABP) family. In terms of tissue distribution, intestine.

It localises to the cytoplasm. In terms of biological role, FABPs are thought to play a role in the intracellular transport of long-chain fatty acids and their acyl-CoA esters. This chain is Fatty acid-binding protein, intestinal (fabp2), found in Rhamdia sapo (South American catfish).